A 372-amino-acid polypeptide reads, in one-letter code: tRNA-specific 2-thiouridylase MnmA (372 aa).

Residues 11-18 (GMSGGVDS) and methionine 37 each bind ATP. The interval 97–99 (NPD) is interaction with target base in tRNA. The Nucleophile role is filled by cysteine 102. An intrachain disulfide couples cysteine 102 to cysteine 199. Glycine 126 lines the ATP pocket. The segment at 149–151 (KDQ) is interaction with tRNA. The active-site Cysteine persulfide intermediate is cysteine 199. Residues 309–310 (RY) are interaction with tRNA.

The protein belongs to the MnmA/TRMU family.

The protein resides in the cytoplasm. It carries out the reaction S-sulfanyl-L-cysteinyl-[protein] + uridine(34) in tRNA + AH2 + ATP = 2-thiouridine(34) in tRNA + L-cysteinyl-[protein] + A + AMP + diphosphate + H(+). Functionally, catalyzes the 2-thiolation of uridine at the wobble position (U34) of tRNA, leading to the formation of s(2)U34. The protein is tRNA-specific 2-thiouridylase MnmA of Staphylococcus epidermidis (strain ATCC 35984 / DSM 28319 / BCRC 17069 / CCUG 31568 / BM 3577 / RP62A).